The following is a 254-amino-acid chain: MGQKVNPTGFRLGIIKDWTSRWYDDGPVIAEKIKQDQVIRNYISARLKKEKAGVSKVVIERTTKHIKINIYAARPGAVVGRKGEEINNLSQELTRITGREVKIDVIEVIKPEIEAQLIGENIAYQLENRVSFRRAMKQAIQQAMRAGAEGIRIRCAGRLGGVEIARSEQYKEGKIPLHTLRANVDYASVTAHTIAGAIGIKVWVYKGEVLVQRLDAIEEEEMKKMQERRNDSRGRGRGDGRGAKRRRRPAAKKA.

In terms of domain architecture, KH type-2 spans 39 to 109 (IRNYISARLK…EVKIDVIEVI (71 aa)). The segment at 220–254 (EEMKKMQERRNDSRGRGRGDGRGAKRRRRPAAKKA) is disordered. Positions 221-242 (EMKKMQERRNDSRGRGRGDGRG) are enriched in basic and acidic residues. Over residues 243–254 (AKRRRRPAAKKA) the composition is skewed to basic residues.

It belongs to the universal ribosomal protein uS3 family. As to quaternary structure, part of the 30S ribosomal subunit. Forms a tight complex with proteins S10 and S14.

In terms of biological role, binds the lower part of the 30S subunit head. Binds mRNA in the 70S ribosome, positioning it for translation. The sequence is that of Small ribosomal subunit protein uS3 from Chlorobaculum parvum (strain DSM 263 / NCIMB 8327) (Chlorobium vibrioforme subsp. thiosulfatophilum).